Here is a 261-residue protein sequence, read N- to C-terminus: uncharacterized protein (261 aa).

This is an uncharacterized protein from Mycobacterium tuberculosis (strain CDC 1551 / Oshkosh).